A 100-amino-acid chain; its full sequence is UPF0045 protein MJ1052 (100 aa).

Belongs to the UPF0045 family.

This is UPF0045 protein MJ1052 from Methanocaldococcus jannaschii (strain ATCC 43067 / DSM 2661 / JAL-1 / JCM 10045 / NBRC 100440) (Methanococcus jannaschii).